Here is a 504-residue protein sequence, read N- to C-terminus: Sodium/proline symporter (504 aa).

13 helical membrane-spanning segments follow: residues 8 to 28 (LITF…AYYY), 50 to 70 (SAGA…AVYL), 73 to 93 (LVEG…WLLV), 127 to 147 (LVSA…GVVA), 163 to 183 (ALWY…FLAV), 189 to 209 (IQAT…LLSF), 240 to 260 (LGLL…HILA), 281 to 301 (WMVL…PYFF), 324 to 344 (LLFN…AVMS), 374 to 394 (ELVW…IWIA), 405 to 425 (VEFA…FSLF), 434 to 454 (AMAG…VVPA), and 461 to 481 (VYEM…ISLL).

The protein belongs to the sodium:solute symporter (SSF) (TC 2.A.21) family.

Its subcellular location is the cell inner membrane. The catalysed reaction is L-proline(in) + Na(+)(in) = L-proline(out) + Na(+)(out). Functionally, catalyzes the sodium-dependent uptake of extracellular L-proline. The chain is Sodium/proline symporter (putP) from Haemophilus influenzae (strain ATCC 51907 / DSM 11121 / KW20 / Rd).